Here is a 642-residue protein sequence, read N- to C-terminus: Tigger transposable element derived 5 (642 aa).

The disordered stretch occupies residues 1–54 (MYPASPPAGPALHPVPHRARLPQPRCLAEPPRSPAPGPGSTARPPPPPAPGPRP). Residues 31 to 53 (PRSPAPGPGSTARPPPPPAPGPR) show a composition bias toward pro residues. The 52-residue stretch at 57-108 (AVKMTFRKAYSIKDKLQAIERVKGGERQASVCRDFGVPGGTLRGWLKDEPKL) folds into the HTH psq-type domain. 2 DNA-binding regions (H-T-H motif) span residues 84–104 (QASVCRDFGVPGGTLRGWLKD) and 155–188 (PVIQAQAEAFARQIYGPECTFKASHGWFWRWQKR). The 74-residue stretch at 122–195 (QRKKMRLANE…QKRHGISSQR (74 aa)) folds into the HTH CENPB-type domain. Positions 202–238 (SPVAGPAPVKEEPAQSPGAVLVPDGAPATLPHSEGGY) are disordered. Residues 240 to 365 (DEQIYNANVT…CLQQKAVLLV (126 aa)) form the DDE-1 domain. 2 disordered regions span residues 375–400 (TSMPPLEESEETPRQCQPELLGSPEE) and 548–581 (GCREEVAPAAPPSPASLPSSIGAGEEEEEATEQG).

The protein belongs to the tigger transposable element derived protein family.

The protein resides in the nucleus. The protein is Tigger transposable element derived 5 (Tigd5) of Mus musculus (Mouse).